The chain runs to 364 residues: Mannose-1-phosphate guanyltransferase (364 aa).

This sequence belongs to the transferase hexapeptide repeat family.

It is found in the cytoplasm. It catalyses the reaction alpha-D-mannose 1-phosphate + GTP + H(+) = GDP-alpha-D-mannose + diphosphate. It functions in the pathway nucleotide-sugar biosynthesis; GDP-alpha-D-mannose biosynthesis; GDP-alpha-D-mannose from alpha-D-mannose 1-phosphate (GTP route): step 1/1. Involved in cell wall synthesis where it is required for glycosylation. Involved in cell cycle progression through cell-size checkpoint. The protein is Mannose-1-phosphate guanyltransferase (mpg-1) of Neurospora crassa (strain ATCC 24698 / 74-OR23-1A / CBS 708.71 / DSM 1257 / FGSC 987).